The primary structure comprises 239 residues: Mediator of RNA polymerase II transcription subunit 7 (239 aa).

Disordered stretches follow at residues 1–21 (MSSL…PPPP) and 43–66 (LFVN…DMSV). Over residues 46–66 (NDEKGKTKGKEKKSDDRDMSV) the composition is skewed to basic and acidic residues.

Belongs to the Mediator complex subunit 7 family. In terms of assembly, component of the Mediator complex.

The protein localises to the nucleus. In terms of biological role, component of the Mediator complex, a coactivator involved in the regulated transcription of nearly all RNA polymerase II-dependent genes. Mediator functions as a bridge to convey information from gene-specific regulatory proteins to the basal RNA polymerase II transcription machinery. Mediator is recruited to promoters by direct interactions with regulatory proteins and serves as a scaffold for the assembly of a functional preinitiation complex with RNA polymerase II and the general transcription factors. In Cryptococcus neoformans var. neoformans serotype D (strain B-3501A) (Filobasidiella neoformans), this protein is Mediator of RNA polymerase II transcription subunit 7 (MED7).